Here is a 154-residue protein sequence, read N- to C-terminus: Large ribosomal subunit protein uL13 (154 aa).

Belongs to the universal ribosomal protein uL13 family. As to quaternary structure, part of the 50S ribosomal subunit.

Its function is as follows. This protein is one of the early assembly proteins of the 50S ribosomal subunit, although it is not seen to bind rRNA by itself. It is important during the early stages of 50S assembly. The sequence is that of Large ribosomal subunit protein uL13 from Brucella anthropi (strain ATCC 49188 / DSM 6882 / CCUG 24695 / JCM 21032 / LMG 3331 / NBRC 15819 / NCTC 12168 / Alc 37) (Ochrobactrum anthropi).